We begin with the raw amino-acid sequence, 118 residues long: NADH-ubiquinone oxidoreductase chain 3 (118 aa).

2 consecutive transmembrane segments (helical) span residues 7 to 27 (ICIYLVISPLVSLIPLGLPFL) and 87 to 107 (IDPFGSWSMMAFLLILTIGSL).

This sequence belongs to the complex I subunit 3 family.

It localises to the mitochondrion membrane. The enzyme catalyses a ubiquinone + NADH + 5 H(+)(in) = a ubiquinol + NAD(+) + 4 H(+)(out). Its function is as follows. Core subunit of the mitochondrial membrane respiratory chain NADH dehydrogenase (Complex I) that is believed to belong to the minimal assembly required for catalysis. Complex I functions in the transfer of electrons from NADH to the respiratory chain. The immediate electron acceptor for the enzyme is believed to be ubiquinone. This Solanum tuberosum (Potato) protein is NADH-ubiquinone oxidoreductase chain 3 (ND3).